The following is a 144-amino-acid chain: Nucleoside diphosphate kinase (144 aa).

Residues Lys11, Phe59, Arg87, Thr93, Arg104, and Asn114 each contribute to the ATP site. His117 functions as the Pros-phosphohistidine intermediate in the catalytic mechanism.

Belongs to the NDK family. In terms of assembly, homotetramer. The cofactor is Mg(2+).

It localises to the cytoplasm. The enzyme catalyses a 2'-deoxyribonucleoside 5'-diphosphate + ATP = a 2'-deoxyribonucleoside 5'-triphosphate + ADP. It carries out the reaction a ribonucleoside 5'-diphosphate + ATP = a ribonucleoside 5'-triphosphate + ADP. Major role in the synthesis of nucleoside triphosphates other than ATP. The ATP gamma phosphate is transferred to the NDP beta phosphate via a ping-pong mechanism, using a phosphorylated active-site intermediate. The sequence is that of Nucleoside diphosphate kinase from Aliivibrio fischeri (strain MJ11) (Vibrio fischeri).